We begin with the raw amino-acid sequence, 282 residues long: Bifunctional protein FolD (282 aa).

NADP(+)-binding positions include 165–167 (NRS), Ser-190, and Ile-231.

It belongs to the tetrahydrofolate dehydrogenase/cyclohydrolase family. As to quaternary structure, homodimer.

It carries out the reaction (6R)-5,10-methylene-5,6,7,8-tetrahydrofolate + NADP(+) = (6R)-5,10-methenyltetrahydrofolate + NADPH. The enzyme catalyses (6R)-5,10-methenyltetrahydrofolate + H2O = (6R)-10-formyltetrahydrofolate + H(+). Its pathway is one-carbon metabolism; tetrahydrofolate interconversion. Functionally, catalyzes the oxidation of 5,10-methylenetetrahydrofolate to 5,10-methenyltetrahydrofolate and then the hydrolysis of 5,10-methenyltetrahydrofolate to 10-formyltetrahydrofolate. This chain is Bifunctional protein FolD, found in Clostridium botulinum (strain Kyoto / Type A2).